A 160-amino-acid chain; its full sequence is MKLNDISDNPGSSKSRMRVGRGIGSGKGKTCGRGVKGQKARTGVAIKGFEGGQMPIHRRLPKRGFWNPFSTDYNEVNLGRIQTAIDAGKLNVALPVTIEALVEAGVCAKARDGVKILGNGELKAKLTFEVASASKTAVAAIEQLGGSITLLKAQPAAAEA.

A compositionally biased stretch (polar residues) spans methionine 1–lysine 14. A disordered region spans residues methionine 1–valine 35. Positions arginine 21–valine 35 are enriched in gly residues.

The protein belongs to the universal ribosomal protein uL15 family. In terms of assembly, part of the 50S ribosomal subunit.

In terms of biological role, binds to the 23S rRNA. This is Large ribosomal subunit protein uL15 from Beijerinckia indica subsp. indica (strain ATCC 9039 / DSM 1715 / NCIMB 8712).